We begin with the raw amino-acid sequence, 149 residues long: Large ribosomal subunit protein bL9 (149 aa).

It belongs to the bacterial ribosomal protein bL9 family.

Its function is as follows. Binds to the 23S rRNA. The polypeptide is Large ribosomal subunit protein bL9 (Campylobacter curvus (strain 525.92)).